We begin with the raw amino-acid sequence, 300 residues long: ClpXP adapter protein SpxH (300 aa).

Belongs to the SpxH family. In terms of assembly, interacts with Spx.

The protein localises to the cytoplasm. Functionally, adapter protein required for efficient degradation of Spx by ClpXP under non-stress conditions. Interaction with Spx stabilizes Spx and exposes the C-terminus of Spx for recognition and proteolysis by ClpXP. The chain is ClpXP adapter protein SpxH from Bacillus licheniformis (strain ATCC 14580 / DSM 13 / JCM 2505 / CCUG 7422 / NBRC 12200 / NCIMB 9375 / NCTC 10341 / NRRL NRS-1264 / Gibson 46).